The chain runs to 461 residues: Serine/threonine-protein kinase ppk24, mitochondrial (461 aa).

The Protein kinase domain occupies 120 to 416 (FQHLKSIAKG…LDSILGTAWV (297 aa)). Residues 126-134 (IAKGATSTI) and Lys153 contribute to the ATP site. Asp256 acts as the Proton acceptor in catalysis.

It belongs to the protein kinase superfamily. Ser/Thr protein kinase family.

It is found in the mitochondrion. It catalyses the reaction L-seryl-[protein] + ATP = O-phospho-L-seryl-[protein] + ADP + H(+). The catalysed reaction is L-threonyl-[protein] + ATP = O-phospho-L-threonyl-[protein] + ADP + H(+). Its function is as follows. Has a role late in meiosis. This chain is Serine/threonine-protein kinase ppk24, mitochondrial (ppk24), found in Schizosaccharomyces pombe (strain 972 / ATCC 24843) (Fission yeast).